The chain runs to 725 residues: Methionine--tRNA ligase (725 aa).

A 'HIGH' region motif is present at residues 27–37 (PYANGQIHIGH). Zn(2+) contacts are provided by Cys-158, Cys-161, Cys-171, and Cys-174. A 'KMSKS' region motif is present at residues 348–352 (KMSKS). Residue Lys-351 participates in ATP binding. The 107-residue stretch at 619–725 (DFAKIDLRIA…SGAKPGMRVK (107 aa)) folds into the tRNA-binding domain.

It belongs to the class-I aminoacyl-tRNA synthetase family. MetG type 1 subfamily. Homodimer. It depends on Zn(2+) as a cofactor.

The protein localises to the cytoplasm. The enzyme catalyses tRNA(Met) + L-methionine + ATP = L-methionyl-tRNA(Met) + AMP + diphosphate. Its function is as follows. Is required not only for elongation of protein synthesis but also for the initiation of all mRNA translation through initiator tRNA(fMet) aminoacylation. In Burkholderia pseudomallei (strain 668), this protein is Methionine--tRNA ligase.